We begin with the raw amino-acid sequence, 142 residues long: Large ribosomal subunit protein uL13 (142 aa).

It belongs to the universal ribosomal protein uL13 family. Part of the 50S ribosomal subunit.

In terms of biological role, this protein is one of the early assembly proteins of the 50S ribosomal subunit, although it is not seen to bind rRNA by itself. It is important during the early stages of 50S assembly. This is Large ribosomal subunit protein uL13 from Idiomarina loihiensis (strain ATCC BAA-735 / DSM 15497 / L2-TR).